Here is a 64-residue protein sequence, read N- to C-terminus: Beta-defensin 5 (64 aa).

An N-terminal signal peptide occupies residues 1–22; the sequence is MRLHHLLLVLLFLVLSAGSGFT. Position 23 is a pyrrolidone carboxylic acid (Q23). Cystine bridges form between C31/C60, C38/C53, and C43/C61.

The protein belongs to the beta-defensin family. In terms of tissue distribution, neutrophilic granules. Alveolar macrophages.

The protein resides in the secreted. Its function is as follows. Has bactericidal activity. Active against E.coli ML35 but not against S.aureus 502A. The chain is Beta-defensin 5 (DEFB5) from Bos taurus (Bovine).